Here is a 206-residue protein sequence, read N- to C-terminus: Large ribosomal subunit protein uL4 (206 aa).

Residues 47-77 form a disordered region; sequence GTQSTKTRSEVRGGGIKPWRQKGTGRARQGS.

It belongs to the universal ribosomal protein uL4 family. In terms of assembly, part of the 50S ribosomal subunit.

One of the primary rRNA binding proteins, this protein initially binds near the 5'-end of the 23S rRNA. It is important during the early stages of 50S assembly. It makes multiple contacts with different domains of the 23S rRNA in the assembled 50S subunit and ribosome. Functionally, forms part of the polypeptide exit tunnel. This chain is Large ribosomal subunit protein uL4, found in Clostridium beijerinckii (strain ATCC 51743 / NCIMB 8052) (Clostridium acetobutylicum).